Reading from the N-terminus, the 749-residue chain is Phototropin (749 aa).

Residues 7–80 (PASQLTKVLA…QKIRDAIKKG (74 aa)) enclose the PAS 1 domain. FMN-binding positions include 56-61 (NCRFLQ), arginine 74, asparagine 89, asparagine 99, and glutamine 120. Cysteine 57 is subject to S-4a-FMN cysteine. The PAC 1 domain occupies 81-135 (EACSVRLLNYRKDGTPFWNLLTVTPIKTPDGRVSKFVGVQVDVTSKTEGKALADN). Residues 200–273 (VALDLATTVE…DQIRAAIKEG (74 aa)) form the PAS 2 domain. A PAC 2 domain is found at 274 to 328 (SELTVRILNYTKAGKAFWNMFTLAPMRDQDGHARFFVGVQVDVTAQSTSPDKAPV). Residues 404–712 (FRRVKQLGAG…ANEIKSHPWF (309 aa)) enclose the Protein kinase domain. Residues 410–418 (LGAGDVGLV) and lysine 433 contribute to the ATP site. Aspartate 529 acts as the Proton acceptor in catalysis. Disordered stretches follow at residues 563 to 591 (KIGG…SSSG) and 729 to 749 (PRRA…FDNY). The 37-residue stretch at 713 to 749 (KGINWALLRHQQPPYVPRRASKAAGGSSTGGAAFDNY) folds into the AGC-kinase C-terminal domain. Low complexity predominate over residues 734-749 (KAAGGSSTGGAAFDNY).

This sequence belongs to the protein kinase superfamily. AGC Ser/Thr protein kinase family. The cofactor is FMN. In terms of processing, autophosphorylated in response to blue light irradiation. Post-translationally, 2 molecules of FMN bind covalently to cysteines after exposure to blue light and are reversed in the dark. As to expression, expressed in gametes, pre-gametes and gametes generated by pre-gametes (at protein level).

The protein resides in the membrane. The enzyme catalyses L-seryl-[protein] + ATP = O-phospho-L-seryl-[protein] + ADP + H(+). It carries out the reaction L-threonyl-[protein] + ATP = O-phospho-L-threonyl-[protein] + ADP + H(+). Protein kinase that acts as a blue light photoreceptor. Required for non-photochemical quenching (NPQ), a mechanism that converts and dissipates the harmful excess absorbed light energy into heat and protect the photosynthetic apparatus from photo-oxidative damage. Controls the energy-dependent chlorophyll fluorescence quenching (qE) activity of chlorophyll excited states by inducing the expression of the qE effector protein LHCSR3 in high light intensities. The polypeptide is Phototropin (Chlamydomonas reinhardtii (Chlamydomonas smithii)).